Reading from the N-terminus, the 501-residue chain is ATP synthase subunit alpha (501 aa).

Residue 169-176 (GDRQTGKT) participates in ATP binding.

The protein belongs to the ATPase alpha/beta chains family. In terms of assembly, F-type ATPases have 2 components, CF(1) - the catalytic core - and CF(0) - the membrane proton channel. CF(1) has five subunits: alpha(3), beta(3), gamma(1), delta(1), epsilon(1). CF(0) has three main subunits: a(1), b(2) and c(9-12). The alpha and beta chains form an alternating ring which encloses part of the gamma chain. CF(1) is attached to CF(0) by a central stalk formed by the gamma and epsilon chains, while a peripheral stalk is formed by the delta and b chains.

The protein localises to the cell membrane. The catalysed reaction is ATP + H2O + 4 H(+)(in) = ADP + phosphate + 5 H(+)(out). Functionally, produces ATP from ADP in the presence of a proton gradient across the membrane. The alpha chain is a regulatory subunit. The chain is ATP synthase subunit alpha from Streptococcus pneumoniae (strain 70585).